A 108-amino-acid chain; its full sequence is Long neurotoxin 43 (108 aa).

Positions 1–21 (MKTLLLTLVVVTIVCLDLAYT) are cleaved as a signal peptide. Intrachain disulfides connect cysteine 24-cysteine 42, cysteine 35-cysteine 63, cysteine 48-cysteine 52, cysteine 67-cysteine 78, and cysteine 79-cysteine 84.

It belongs to the three-finger toxin family. Long-chain subfamily. Type II alpha-neurotoxin sub-subfamily. In terms of tissue distribution, expressed by the venom gland.

It localises to the secreted. In terms of biological role, binds with high affinity to muscular (alpha-1/CHRNA1) and neuronal (alpha-7/CHRNA7) nicotinic acetylcholine receptor (nAChR) and inhibits acetylcholine from binding to the receptor, thereby impairing neuromuscular and neuronal transmission. This Drysdalia coronoides (White-lipped snake) protein is Long neurotoxin 43.